Reading from the N-terminus, the 386-residue chain is Oxysterol-binding protein-related protein 4A (386 aa).

This sequence belongs to the OSBP family. Expressed in roots, stems and flowers.

Functionally, may be involved in the transport of sterols. The sequence is that of Oxysterol-binding protein-related protein 4A (ORP4A) from Arabidopsis thaliana (Mouse-ear cress).